The chain runs to 157 residues: 2-C-methyl-D-erythritol 2,4-cyclodiphosphate synthase (157 aa).

A divalent metal cation-binding residues include D9 and H11. 4-CDP-2-C-methyl-D-erythritol 2-phosphate contacts are provided by residues 9-11 (DVH) and 35-36 (HS). H43 contacts a divalent metal cation. 4-CDP-2-C-methyl-D-erythritol 2-phosphate contacts are provided by residues 57–59 (DIG), 62–66 (FPETD), 133–136 (TTME), F140, and K143.

The protein belongs to the IspF family. As to quaternary structure, homotrimer. A divalent metal cation is required as a cofactor.

The enzyme catalyses 4-CDP-2-C-methyl-D-erythritol 2-phosphate = 2-C-methyl-D-erythritol 2,4-cyclic diphosphate + CMP. The protein operates within isoprenoid biosynthesis; isopentenyl diphosphate biosynthesis via DXP pathway; isopentenyl diphosphate from 1-deoxy-D-xylulose 5-phosphate: step 4/6. Involved in the biosynthesis of isopentenyl diphosphate (IPP) and dimethylallyl diphosphate (DMAPP), two major building blocks of isoprenoid compounds. Catalyzes the conversion of 4-diphosphocytidyl-2-C-methyl-D-erythritol 2-phosphate (CDP-ME2P) to 2-C-methyl-D-erythritol 2,4-cyclodiphosphate (ME-CPP) with a corresponding release of cytidine 5-monophosphate (CMP). In Enterococcus faecalis (strain ATCC 700802 / V583), this protein is 2-C-methyl-D-erythritol 2,4-cyclodiphosphate synthase.